The sequence spans 202 residues: FMN-dependent NADH:quinone oxidoreductase 2 (202 aa).

FMN contacts are provided by residues S9, 15-17 (SAS), 95-98 (MYNF), and 139-142 (TAGG).

This sequence belongs to the azoreductase type 1 family. In terms of assembly, homodimer. FMN is required as a cofactor.

It catalyses the reaction 2 a quinone + NADH + H(+) = 2 a 1,4-benzosemiquinone + NAD(+). The enzyme catalyses N,N-dimethyl-1,4-phenylenediamine + anthranilate + 2 NAD(+) = 2-(4-dimethylaminophenyl)diazenylbenzoate + 2 NADH + 2 H(+). Functionally, quinone reductase that provides resistance to thiol-specific stress caused by electrophilic quinones. Reduces both benzoquinones and naphthoquinones efficiently. In terms of biological role, also exhibits azoreductase activity. Catalyzes the reductive cleavage of the azo bond in aromatic azo compounds to the corresponding amines. Preferred substrates are the large bis-azo dye Ponceau BS, amaranth and tropaeolin O. The polypeptide is FMN-dependent NADH:quinone oxidoreductase 2 (Pseudomonas aeruginosa (strain ATCC 15692 / DSM 22644 / CIP 104116 / JCM 14847 / LMG 12228 / 1C / PRS 101 / PAO1)).